A 717-amino-acid chain; its full sequence is Delta-1-pyrroline-5-carboxylate synthase A (717 aa).

The tract at residues 1 to 296 is glutamate 5-kinase; the sequence is MEELDRSRAF…WAPITDSNAR (296 aa). Substrate-binding residues include Ser-60, Asp-157, and Asn-176. ATP is bound by residues 196–197 and 236–242; these read SD and RGGMTAK. The tract at residues 297 to 717 is gamma-glutamyl phosphate reductase; it reads DMAVAARESS…YTHQDIPIQA (421 aa).

In the N-terminal section; belongs to the glutamate 5-kinase family. This sequence in the C-terminal section; belongs to the gamma-glutamyl phosphate reductase family.

The catalysed reaction is L-glutamate + ATP = L-glutamyl 5-phosphate + ADP. The enzyme catalyses L-glutamate 5-semialdehyde + phosphate + NADP(+) = L-glutamyl 5-phosphate + NADPH + H(+). It participates in amino-acid biosynthesis; L-proline biosynthesis; L-glutamate 5-semialdehyde from L-glutamate: step 1/2. It functions in the pathway amino-acid biosynthesis; L-proline biosynthesis; L-glutamate 5-semialdehyde from L-glutamate: step 2/2. P5CS plays a key role in proline biosynthesis, leading to osmoregulation in plants. This Arabidopsis thaliana (Mouse-ear cress) protein is Delta-1-pyrroline-5-carboxylate synthase A (P5CSA).